A 359-amino-acid polypeptide reads, in one-letter code: WD repeat-containing protein 89 homolog (359 aa).

WD repeat units follow at residues 23–62, 65–104, 106–144, 146–186, 192–232, and 294–333; these read IGDD…ILNV, GHKD…CSQT, NQQG…RKFD, SHTE…DDDA, NAED…KIKH, and VHTD…TNIL.

This chain is WD repeat-containing protein 89 homolog (wdr89), found in Dictyostelium discoideum (Social amoeba).